The chain runs to 117 residues: MDIIKGIDAAQLKKDIIDFNTGDTIKVHVRIKEGTRERIQVFEGIVIKRQGGGIAETFTVRRISYGVGVERTFPVHSPKIEKIEIVKHGKVRRARIFYLRDRIGKAAFKIKERKNFK.

Belongs to the bacterial ribosomal protein bL19 family.

This protein is located at the 30S-50S ribosomal subunit interface and may play a role in the structure and function of the aminoacyl-tRNA binding site. In Alkaliphilus metalliredigens (strain QYMF), this protein is Large ribosomal subunit protein bL19.